Consider the following 162-residue polypeptide: UPF0305 protein MmarC7_1691 (162 aa).

This sequence belongs to the UPF0305 family.

The sequence is that of UPF0305 protein MmarC7_1691 from Methanococcus maripaludis (strain C7 / ATCC BAA-1331).